A 213-amino-acid chain; its full sequence is uncharacterized protein (213 aa).

Residues 1 to 14 are compositionally biased toward polar residues; it reads MSSDVLVTTPAQRQ. A disordered region spans residues 1 to 26; that stretch reads MSSDVLVTTPAQRQTEPHAEAVSRNR. An HTH tetR-type domain is found at 29–89; it reads QATFRKVLAA…EVYLDLVRQV (61 aa).

This is an uncharacterized protein from Mycobacterium tuberculosis (strain CDC 1551 / Oshkosh).